The sequence spans 382 residues: Manganese peroxidase H4 (382 aa).

An N-terminal signal peptide occupies residues 1–24 (MAFGSLLAFVALAAITRAAPTAES). 5 disulfide bridges follow: cysteine 27-cysteine 39, cysteine 38-cysteine 313, cysteine 57-cysteine 141, cysteine 277-cysteine 344, and cysteine 366-cysteine 373. Glutamate 59 and glutamate 63 together coordinate Mn(2+). Histidine 70 acts as the Proton acceptor in catalysis. Residues aspartate 71, glycine 86, aspartate 88, and serine 90 each contribute to the Ca(2+) site. N-linked (GlcNAc...) asparagine glycosylation is found at asparagine 100 and asparagine 155. Histidine 197 contributes to the heme b binding site. Residue threonine 198 participates in Ca(2+) binding. Mn(2+) is bound at residue aspartate 203. Residues aspartate 215, threonine 217, threonine 220, and aspartate 222 each coordinate Ca(2+). N-linked (GlcNAc...) asparagine glycosylation occurs at asparagine 241.

This sequence belongs to the peroxidase family. Ligninase subfamily. Heme b serves as cofactor. Requires Ca(2+) as cofactor.

It is found in the secreted. The enzyme catalyses 2 Mn(2+) + H2O2 + 2 H(+) = 2 Mn(3+) + 2 H2O. Catalyzes the oxidation of Mn(2+) to Mn(3+). The latter, acting as a diffusible redox mediator, is capable of oxidizing a variety of lignin compounds. This Phanerodontia chrysosporium (White-rot fungus) protein is Manganese peroxidase H4.